Here is a 139-residue protein sequence, read N- to C-terminus: D-ribose pyranase (139 aa).

The Proton donor role is filled by H20. Substrate contacts are provided by residues D28, H106, and 128–130 (YAN).

This sequence belongs to the RbsD / FucU family. RbsD subfamily. As to quaternary structure, homodecamer.

The protein localises to the cytoplasm. It catalyses the reaction beta-D-ribopyranose = beta-D-ribofuranose. It participates in carbohydrate metabolism; D-ribose degradation; D-ribose 5-phosphate from beta-D-ribopyranose: step 1/2. Functionally, catalyzes the interconversion of beta-pyran and beta-furan forms of D-ribose. This chain is D-ribose pyranase, found in Escherichia coli (strain 55989 / EAEC).